A 353-amino-acid polypeptide reads, in one-letter code: MYYLSDLSHYAFFTYISVRAGFAFFIALCLSLFLMPKFITWAKAKNASQPIYEYAPETHKTKCHTPTMGGLIFISSAVIASLFCIKFDNIFAISALLCLILFCLIGLIDDLGKVLKKDNHSGLSPRMKLLAQIIAGLICILPLYFSSELSTELFIPFYKHPLFDMEIFAIVFWILVLISSSNAVNLTDGLDGLATVPSIFSLSTLGIFLYLSGNLNYSEYLLLPKIQGLGEVVIICAALIGALMGFLWYNCYPAQVFMGDSGSLALGGFIGFLAIISKNEILLLLIGFVFVLETVSVILQVGSFKIFNKRVFKMAPIHHHFEKVGWVENKIIVRFWMIALLSNLLALASIKLR.

10 helical membrane passes run F22 to A42, T65 to I85, D88 to I108, L129 to L149, P161 to S181, G192 to S212, G228 to W248, V256 to I276, I281 to V301, and K330 to I350.

It belongs to the glycosyltransferase 4 family. MraY subfamily. Requires Mg(2+) as cofactor.

Its subcellular location is the cell inner membrane. The catalysed reaction is UDP-N-acetyl-alpha-D-muramoyl-L-alanyl-gamma-D-glutamyl-meso-2,6-diaminopimeloyl-D-alanyl-D-alanine + di-trans,octa-cis-undecaprenyl phosphate = di-trans,octa-cis-undecaprenyl diphospho-N-acetyl-alpha-D-muramoyl-L-alanyl-D-glutamyl-meso-2,6-diaminopimeloyl-D-alanyl-D-alanine + UMP. It participates in cell wall biogenesis; peptidoglycan biosynthesis. In terms of biological role, catalyzes the initial step of the lipid cycle reactions in the biosynthesis of the cell wall peptidoglycan: transfers peptidoglycan precursor phospho-MurNAc-pentapeptide from UDP-MurNAc-pentapeptide onto the lipid carrier undecaprenyl phosphate, yielding undecaprenyl-pyrophosphoryl-MurNAc-pentapeptide, known as lipid I. This is Phospho-N-acetylmuramoyl-pentapeptide-transferase from Campylobacter jejuni subsp. jejuni serotype O:6 (strain 81116 / NCTC 11828).